A 76-amino-acid polypeptide reads, in one-letter code: Alpha/kappa-conotoxin-like fe14.2 (76 aa).

Residues 1–24 form the signal peptide; that stretch reads MPSVRSVTCCCLLWMMLSVQLVTP. Residues 25 to 39 constitute a propeptide that is removed on maturation; that stretch reads GSPGTAQLSGQRTAR. Intrachain disulfides connect cysteine 46/cysteine 61 and cysteine 50/cysteine 63. Arginine 64 carries the arginine amide modification. The propeptide occupies 65 to 76; it reads GKRDVVSSSMAV.

This sequence belongs to the conotoxin J superfamily. Expressed by the venom duct.

The protein resides in the secreted. Functionally, highly inhibits both nicotinic acetylcholine receptors (neuronal (alpha-3/beta-4) and muscular (alpha-1/beta-1/epsilon/delta) subtypes) and the voltage-gated potassium channel Kv1.6/KCNA6 subtype. The polypeptide is Alpha/kappa-conotoxin-like fe14.2 (Conus ferrugineus (Cone snail)).